The sequence spans 324 residues: NADH-ubiquinone oxidoreductase chain 1 (324 aa).

Transmembrane regions (helical) follow at residues 9 to 29 (LINP…LTLL), 76 to 96 (LFLV…APMP), 106 to 126 (LGVL…LGSG), 146 to 166 (ISYE…WGGY), 177 to 197 (ALWL…STLA), 228 to 248 (LLFL…AILF), 259 to 279 (ELTT…FLWV), and 299 to 319 (FLPL…AFAG).

This sequence belongs to the complex I subunit 1 family.

It localises to the mitochondrion inner membrane. The catalysed reaction is a ubiquinone + NADH + 5 H(+)(in) = a ubiquinol + NAD(+) + 4 H(+)(out). Its function is as follows. Core subunit of the mitochondrial membrane respiratory chain NADH dehydrogenase (Complex I) that is believed to belong to the minimal assembly required for catalysis. Complex I functions in the transfer of electrons from NADH to the respiratory chain. The immediate electron acceptor for the enzyme is believed to be ubiquinone. The polypeptide is NADH-ubiquinone oxidoreductase chain 1 (MT-ND1) (Formosania lacustris (Oriental stream loach)).